Here is a 194-residue protein sequence, read N- to C-terminus: Small ribosomal subunit protein uS4c (194 aa).

The 62-residue stretch at Met82–Asn143 folds into the S4 RNA-binding domain.

Belongs to the universal ribosomal protein uS4 family. In terms of assembly, part of the 30S ribosomal subunit. Contacts protein S5. The interaction surface between S4 and S5 is involved in control of translational fidelity.

The protein resides in the plastid. It is found in the chloroplast. One of the primary rRNA binding proteins, it binds directly to 16S rRNA where it nucleates assembly of the body of the 30S subunit. In terms of biological role, with S5 and S12 plays an important role in translational accuracy. The protein is Small ribosomal subunit protein uS4c (rps4) of Trimezia steyermarkii (Steyermark's trimezia).